An 860-amino-acid chain; its full sequence is Protein translocase subunit SecA (860 aa).

ATP contacts are provided by residues Gln87, Gly105–Thr109, and Asp514. Residues Cys846, Cys848, Cys857, and Cys858 each coordinate Zn(2+).

This sequence belongs to the SecA family. In terms of assembly, monomer and homodimer. Part of the essential Sec protein translocation apparatus which comprises SecA, SecYEG and auxiliary proteins SecDF. Other proteins may also be involved. The cofactor is Zn(2+).

The protein localises to the cell membrane. It is found in the cytoplasm. The catalysed reaction is ATP + H2O + cellular proteinSide 1 = ADP + phosphate + cellular proteinSide 2.. Functionally, part of the Sec protein translocase complex. Interacts with the SecYEG preprotein conducting channel. Has a central role in coupling the hydrolysis of ATP to the transfer of proteins into and across the cell membrane, serving as an ATP-driven molecular motor driving the stepwise translocation of polypeptide chains across the membrane. This Endomicrobium trichonymphae protein is Protein translocase subunit SecA.